The following is a 331-amino-acid chain: tRNA (guanine-N(7)-)-methyltransferase (331 aa).

S-adenosyl-L-methionine-binding residues include Glu-29, Glu-55, and Asp-105. The active site involves Asp-105. Residues Lys-109 and Asp-141 each coordinate substrate.

Belongs to the class I-like SAM-binding methyltransferase superfamily. TrmB family.

It carries out the reaction guanosine(46) in tRNA + S-adenosyl-L-methionine = N(7)-methylguanosine(46) in tRNA + S-adenosyl-L-homocysteine. It participates in tRNA modification; N(7)-methylguanine-tRNA biosynthesis. In terms of biological role, catalyzes the formation of N(7)-methylguanine at position 46 (m7G46) in tRNA. The protein is tRNA (guanine-N(7)-)-methyltransferase of Deinococcus geothermalis (strain DSM 11300 / CIP 105573 / AG-3a).